The primary structure comprises 270 residues: Tryptophan synthase alpha chain (270 aa).

Catalysis depends on proton acceptor residues glutamate 49 and aspartate 60.

It belongs to the TrpA family. In terms of assembly, tetramer of two alpha and two beta chains.

It carries out the reaction (1S,2R)-1-C-(indol-3-yl)glycerol 3-phosphate + L-serine = D-glyceraldehyde 3-phosphate + L-tryptophan + H2O. It functions in the pathway amino-acid biosynthesis; L-tryptophan biosynthesis; L-tryptophan from chorismate: step 5/5. Its function is as follows. The alpha subunit is responsible for the aldol cleavage of indoleglycerol phosphate to indole and glyceraldehyde 3-phosphate. In Paraburkholderia phytofirmans (strain DSM 17436 / LMG 22146 / PsJN) (Burkholderia phytofirmans), this protein is Tryptophan synthase alpha chain.